A 93-amino-acid polypeptide reads, in one-letter code: UPF0147 protein MM_1385 (93 aa).

Belongs to the UPF0147 family.

The sequence is that of UPF0147 protein MM_1385 from Methanosarcina mazei (strain ATCC BAA-159 / DSM 3647 / Goe1 / Go1 / JCM 11833 / OCM 88) (Methanosarcina frisia).